We begin with the raw amino-acid sequence, 215 residues long: Orotidine 5'-phosphate decarboxylase (215 aa).

Substrate is bound by residues Asp-12, Lys-34, 60–69, Ser-117, 170–180, Gly-193, and Arg-194; these read DFKVADIPNT and PGVGAQGGSAA. Lys-62 acts as the Proton donor in catalysis.

This sequence belongs to the OMP decarboxylase family. Type 1 subfamily. In terms of assembly, homodimer.

It catalyses the reaction orotidine 5'-phosphate + H(+) = UMP + CO2. The protein operates within pyrimidine metabolism; UMP biosynthesis via de novo pathway; UMP from orotate: step 2/2. Its function is as follows. Catalyzes the decarboxylation of orotidine 5'-monophosphate (OMP) to uridine 5'-monophosphate (UMP). The chain is Orotidine 5'-phosphate decarboxylase from Methanococcoides burtonii (strain DSM 6242 / NBRC 107633 / OCM 468 / ACE-M).